The sequence spans 366 residues: PTI1-like tyrosine-protein kinase 2 (366 aa).

Residues 8–23 show a composition bias toward basic and acidic residues; it reads GDKKGDSDLSNEEVHL. Residues 8–50 form a disordered region; the sequence is GDKKGDSDLSNEEVHLKSPWQNSEANQKNQKPQAVVKPEAQKE. Polar residues predominate over residues 26 to 39; it reads PWQNSEANQKNQKP. Residues 71-353 enclose the Protein kinase domain; it reads FGSKSLIGEG…IVVKALQPLL (283 aa). Residues 77–85 and K99 each bind ATP; that span reads IGEGSYGRV. D203 serves as the catalytic Proton acceptor.

This sequence belongs to the protein kinase superfamily. Tyr protein kinase family. In terms of assembly, interacts with OXI1. Autophosphorylated and phosphorylated by OXI1.

It carries out the reaction L-tyrosyl-[protein] + ATP = O-phospho-L-tyrosyl-[protein] + ADP + H(+). With respect to regulation, strongly activated in response to phosphatidic acid (PA) and xylanase in a OXI1- and PDK1-dependent manner, and, to a lesser extent, by hydrogen peroxide and flagellin in a OXI1-dependent manner. Functionally, probable tyrosine-protein kinase involved in oxidative burst-mediated signaling leading to specific genes expression. The polypeptide is PTI1-like tyrosine-protein kinase 2 (PTI12) (Arabidopsis thaliana (Mouse-ear cress)).